A 456-amino-acid chain; its full sequence is Anthocyanidin 3-O-galactosyltransferase F3GT1 (456 aa).

Residues S20, H22, and Q83 each coordinate an anthocyanidin. H22 functions as the Proton acceptor in the catalytic mechanism. Catalysis depends on D118, which acts as the Charge relay. H150 is a binding site for an anthocyanidin. S281, W333, A334, H351, N355, S356, and E359 together coordinate UDP. G374 is an an anthocyanidin binding site.

The protein belongs to the UDP-glycosyltransferase family. In terms of tissue distribution, expressed at low levels in stems and leaves. Expressed in ovaries.

It catalyses the reaction cyanidin + UDP-alpha-D-galactose = cyanidin 3-O-beta-D-galactoside + UDP + H(+). The protein operates within pigment biosynthesis; anthocyanin biosynthesis. Functionally, involved in anthocyanin biosynthesis by catalyzing the galactosylation of cyanidin. Required for the accumulation of anthocyanin in red-fleshed kiwifruit varieties. Seems to be the key enzyme regulating the accumulation of anthocyanin in red-fleshed kiwi fruits. In Actinidia chinensis var. chinensis (Chinese soft-hair kiwi), this protein is Anthocyanidin 3-O-galactosyltransferase F3GT1.